We begin with the raw amino-acid sequence, 63 residues long: Ferredoxin (63 aa).

In terms of domain architecture, 4Fe-4S ferredoxin-type spans 2-29; the sequence is KVTVDQDLCIACGTCIDLCPSVFDWDDE. The [4Fe-4S] cluster site is built by Cys-10, Cys-13, Cys-16, and Cys-55.

[4Fe-4S] cluster is required as a cofactor.

Its function is as follows. Ferredoxins are iron-sulfur proteins that transfer electrons in a wide variety of metabolic reactions. The polypeptide is Ferredoxin (Moorella thermoacetica (Clostridium thermoaceticum)).